Here is a 351-residue protein sequence, read N- to C-terminus: UDP-glucose 4-epimerase 5 (351 aa).

NAD(+) is bound by residues 13–15 (GYI), 34–38 (DNLDN), 64–65 (DL), phenylalanine 86, and lysine 90. 130–132 (SAT) lines the substrate pocket. The active-site Proton acceptor is tyrosine 154. NAD(+) contacts are provided by lysine 158 and tyrosine 182. Substrate contacts are provided by residues 182 to 184 (YFN), 203 to 205 (NNL), 221 to 223 (TVF), arginine 236, and 298 to 301 (RPGD).

The protein belongs to the NAD(P)-dependent epimerase/dehydratase family. In terms of assembly, forms homodimers and heterodimers. NAD(+) serves as cofactor. As to expression, widely expressed.

The enzyme catalyses UDP-alpha-D-glucose = UDP-alpha-D-galactose. It participates in carbohydrate metabolism; galactose metabolism. Enhanced activity by NaCl. Inhibited by UDP. Catalyzes the interconversion between UDP-glucose and UDP-galactose. This is UDP-glucose 4-epimerase 5 from Arabidopsis thaliana (Mouse-ear cress).